A 116-amino-acid chain; its full sequence is Small ribosomal subunit protein bS16 (116 aa).

This sequence belongs to the bacterial ribosomal protein bS16 family.

This chain is Small ribosomal subunit protein bS16, found in Chlamydia trachomatis serovar A (strain ATCC VR-571B / DSM 19440 / HAR-13).